The sequence spans 523 residues: Metalloendopeptidase OMA1, mitochondrial (523 aa).

The N-terminal 45 residues, Met-1–His-45, are a transit peptide targeting the mitochondrion. A propeptide spanning residues Ile-46–Gln-143 is cleaved from the precursor. The Mitochondrial matrix segment spans residues Ala-144–Leu-195. Residues Pro-148–Arg-167 form a cardiolipin-binding region. Residues Val-165–Leu-195 form a stress-sensor region region. A helical membrane pass occupies residues Phe-196–Val-216. Zn(2+) is bound at residue His-327. The active site involves Glu-328. Zn(2+)-binding residues include His-331 and Glu-392. Cys-407 and Cys-465 are oxidised to a cystine.

This sequence belongs to the peptidase M48 family. As to quaternary structure, homooligomer. Requires Zn(2+) as cofactor. In terms of processing, autocatalytically cleaved in response to mitochondrial depolarization both at the N-terminus and C-terminus to generate the short active form (S-OMA1). Autocatalytic processing at the C-terminus takes place at residues 447-456. The S-OMA1 form is unstable. OMA1 pre-processing by AFG3L2 may participate in maturation before OMA1 autocatalytic cleavage. Degraded by YMEL1 in response to membrane depolarization. Protein turnover is regulated by prohibitin (PHB and PHB2), which promotes degradation of OMA1 in a cardiolipin-binding manner. Post-translationally, may form a redox-dependent disulfide bond. Exists in a semi-oxidized state and is activated by prolonged hypoxia.

Its subcellular location is the mitochondrion inner membrane. Protease activity is activated upon autocatalytic cleavage in response to mitochondrial depolarization. Its function is as follows. Metalloprotease that is part of the quality control system in the inner membrane of mitochondria. Activated in response to various mitochondrial stress, leading to the proteolytic cleavage of target proteins, such as OPA1, UQCC3 and DELE1. Involved in the fusion of the mitochondrial inner membranes by mediating cleavage of OPA1 at S1 position, generating the soluble OPA1 (S-OPA1), which cooperates with the membrane form (L-OPA1) to coordinate the fusion of mitochondrial inner membranes. Following stress conditions that induce loss of mitochondrial membrane potential, mediates cleavage of OPA1, leading to excess production of soluble OPA1 (S-OPA1) and negative regulation of mitochondrial fusion. Involved in mitochondrial safeguard in response to transient mitochondrial membrane depolarization (flickering) by catalyzing cleavage of OPA1, leading to excess production of S-OPA1, preventing mitochondrial hyperfusion. Also acts as a regulator of apoptosis: upon BAK and BAX aggregation, mediates cleavage of OPA1, leading to the remodeling of mitochondrial cristae and allowing the release of cytochrome c from mitochondrial cristae. In depolarized mitochondria, may also act as a backup protease for PINK1 by mediating PINK1 cleavage and promoting its subsequent degradation by the proteasome. May also cleave UQCC3 in response to mitochondrial depolarization. Also acts as an activator of the integrated stress response (ISR): in response to mitochondrial stress, mediates cleavage of DELE1 to generate the processed form of DELE1 (S-DELE1), which translocates to the cytosol and activates EIF2AK1/HRI to trigger the ISR. Its role in mitochondrial quality control is essential for regulating lipid metabolism as well as to maintain body temperature and energy expenditure under cold-stress conditions. Binds cardiolipin, possibly regulating its protein turnover. Required for the stability of the respiratory supercomplexes. In Bos taurus (Bovine), this protein is Metalloendopeptidase OMA1, mitochondrial.